A 271-amino-acid polypeptide reads, in one-letter code: Delta(3,5)-Delta(2,4)-dienoyl-CoA isomerase (271 aa).

Substrate-binding positions include 62–66 and leucine 120; that span reads SGGKF. Glutamate 152 functions as the Proton donor/acceptor in the catalytic mechanism. Residues 269 to 271 carry the Peroxisome targeting signal (PTS1) motif; sequence HKL.

This sequence belongs to the enoyl-CoA hydratase/isomerase family. In terms of assembly, interacts with ECI1.

Its subcellular location is the peroxisome. The catalysed reaction is a (3E,5Z)-dienoyl-CoA = a (2E,4E)-(5,6-saturated)-dienoyl-CoA. It participates in lipid metabolism; fatty acid beta-oxidation. Its function is as follows. Peroxisomal di-isomerase that is involved in fatty acid metabolism enzyme by converting 3,5-dienoyl-CoAs to the corresponding 2,4-dienoyl-CoAs. Required for ECI1 to be located to the peroxisome. This is Delta(3,5)-Delta(2,4)-dienoyl-CoA isomerase from Saccharomyces cerevisiae (strain ATCC 204508 / S288c) (Baker's yeast).